Consider the following 110-residue polypeptide: Putative zinc finger protein ORF110 (110 aa).

The segment at 3–26 (YVCTACKLKFHTFEEFKIHVHLFH) adopts a C2H2-type zinc-finger fold.

The protein is Putative zinc finger protein ORF110 of Acidianus filamentous virus 1 (isolate United States/Yellowstone) (AFV-1).